We begin with the raw amino-acid sequence, 205 residues long: MKRTRTSKAWMREHINDTYVQLARKEGWRSRAAFKLMEMDDKDKLLKHGEVVVDLGATPGGWSQVAVKRVGDGGLVFALDLLEMEPIHGVHFIQGDFREDEVLQQLEEQLGERRVGLVMSDMAPNMSGVPLVDQARIMHLAELGLEFSRVHLKPEGAFLVKVFQGTDYETFLKQMRETFKTVAVRKPDASRDRSPELYLLGRTLR.

Positions 60, 62, 80, 96, and 121 each coordinate S-adenosyl-L-methionine. Lysine 161 serves as the catalytic Proton acceptor.

It belongs to the class I-like SAM-binding methyltransferase superfamily. RNA methyltransferase RlmE family.

It localises to the cytoplasm. It carries out the reaction uridine(2552) in 23S rRNA + S-adenosyl-L-methionine = 2'-O-methyluridine(2552) in 23S rRNA + S-adenosyl-L-homocysteine + H(+). Functionally, specifically methylates the uridine in position 2552 of 23S rRNA at the 2'-O position of the ribose in the fully assembled 50S ribosomal subunit. The polypeptide is Ribosomal RNA large subunit methyltransferase E (Dechloromonas aromatica (strain RCB)).